A 493-amino-acid chain; its full sequence is Acetylcholine receptor subunit beta-type unc-29 (493 aa).

The first 26 residues, 1 to 26, serve as a signal peptide directing secretion; it reads MRTNRLSWILVLSVVIFLVIINTINA. N-linked (GlcNAc...) asparagine glycans are attached at residues Asn25 and Asn50. At 27 to 232 the chain is on the extracellular side; it reads SDDEERLMVD…QVRIRRKTLF (206 aa). A disulfide bridge connects residues Cys155 and Cys169. 3 helical membrane passes run 233–254, 262–280, and 296–317; these read YTVV…VFFL, ITLT…LLVS, and YLLL…IINV. Over 318 to 445 the chain is Cytoplasmic; sequence YFRGPRTHRM…WKYVAMIIDR (128 aa). A helical transmembrane segment spans residues 446-466; sequence LLLYVFFGITVGGTCGILFSA.

The protein belongs to the ligand-gated ion channel (TC 1.A.9) family. Acetylcholine receptor (TC 1.A.9.1) subfamily. As to quaternary structure, interacts with lev-1. Component of nicotinic acetylcholine receptor composed of 2 non-alpha subunits lev-1 and unc-29, and 3 alpha subunits unc-38, unc-63 and lev-8. Interacts with oig-4. Interacts with crld-1.

Its subcellular location is the postsynaptic cell membrane. The protein localises to the cell membrane. Functionally, non-alpha subunit of nicotinic acetylcholine receptor (nAChR). Involved in nAChR sensitivity to nicotine and levasimole. This is Acetylcholine receptor subunit beta-type unc-29 from Caenorhabditis elegans.